A 601-amino-acid chain; its full sequence is ATP-dependent rRNA helicase SPB4 (601 aa).

The short motif at 14–42 is the Q motif element; that stretch reads LAWSQASLQPWIHDAIDSLGFRSMTPVQA. One can recognise a Helicase ATP-binding domain in the interval 45 to 228; the sequence is IPLFCGNKDV…RTGMSNPVKI (184 aa). 58 to 65 contributes to the ATP binding site; it reads AVTGSGKT. A DEAD box motif is present at residues 176-179; the sequence is DEAD. Residues 257–419 enclose the Helicase C-terminal domain; that stretch reads VLINMLSTLQ…AYKAFSKNLR (163 aa). Residues 507–575 adopt a coiled-coil conformation; it reads KEKIRLETME…QIMNESSDEE (69 aa). The segment covering 532 to 554 has biased composition (basic and acidic residues); sequence LKVKNEAWSSKNEKKEGKQERRE. The disordered stretch occupies residues 532-576; sequence LKVKNEAWSSKNEKKEGKQERREKMKRKREAIEKQIMNESSDEET.

It belongs to the DEAD box helicase family. DDX55/SPB4 subfamily. As to quaternary structure, component of pre-60S ribosomal complexes.

It is found in the nucleus. The protein localises to the nucleolus. It catalyses the reaction ATP + H2O = ADP + phosphate + H(+). In terms of biological role, ATP-binding RNA helicase involved in the biogenesis of 60S ribosomal subunits. Binds 90S pre-ribosomal particles and dissociates from pre-60S ribosomal particles after processing of 27SB pre-rRNA. Required for the normal formation of 18S rRNA through the processing of pre-rRNAs at sites A0, A1 and A2, and the normal formation of 25S and 5.8S rRNAs through the processing of pre-rRNAs at sites C1 and C2. This is ATP-dependent rRNA helicase SPB4 from Meyerozyma guilliermondii (strain ATCC 6260 / CBS 566 / DSM 6381 / JCM 1539 / NBRC 10279 / NRRL Y-324) (Yeast).